The chain runs to 336 residues: Casein kinase II subunit alpha (336 aa).

The 286-residue stretch at 32-317 folds into the Protein kinase domain; it reads YEVVRKIGRG…AKEAMAHPYF (286 aa). Residues 38-46 and Lys-61 each bind ATP; that span reads IGRGKYSEV. Asp-149 serves as the catalytic Proton acceptor.

It belongs to the protein kinase superfamily. Ser/Thr protein kinase family. CK2 subfamily. As to quaternary structure, tetramer composed of two alpha chains, one beta chain and one beta' chain.

The enzyme catalyses L-seryl-[protein] + ATP = O-phospho-L-seryl-[protein] + ADP + H(+). It catalyses the reaction L-threonyl-[protein] + ATP = O-phospho-L-threonyl-[protein] + ADP + H(+). In terms of biological role, catalytic subunit of a constitutively active serine/threonine-protein kinase complex that phosphorylates a large number of substrates containing acidic residues C-terminal to the phosphorylated serine or threonine. Phosphorylates the frq clock protein thus regulating the circadian clock. The polypeptide is Casein kinase II subunit alpha (cka) (Neurospora crassa (strain ATCC 24698 / 74-OR23-1A / CBS 708.71 / DSM 1257 / FGSC 987)).